Here is a 67-residue protein sequence, read N- to C-terminus: Small ribosomal subunit protein eS31 (67 aa).

Zn(2+)-binding residues include C31, C34, C49, and C52. The C4-type zinc-finger motif lies at 31–52; that stretch reads CPKCGAGVFMAEHLNRFACGKC.

This sequence belongs to the eukaryotic ribosomal protein eS31 family. As to quaternary structure, part of the 30S ribosomal subunit. It depends on Zn(2+) as a cofactor.

This is Small ribosomal subunit protein eS31 from Methanococcus maripaludis (strain C5 / ATCC BAA-1333).